Consider the following 428-residue polypeptide: Protein CLP1 homolog (428 aa).

ATP is bound by residues E22, K63, and 127–132; that span reads DVGKST.

Belongs to the Clp1 family. Clp1 subfamily.

Its subcellular location is the nucleus. Its function is as follows. Required for endonucleolytic cleavage during polyadenylation-dependent pre-mRNA 3'-end formation. The polypeptide is Protein CLP1 homolog (Nematostella vectensis (Starlet sea anemone)).